The sequence spans 193 residues: MQLLEERILTDGNILGENILKVDNFLTHQVDYRLMKAIGKVFAQKYAEAGITKVVTIEASGIAPAVYAAEAMDVPMIFAKKHKNITMTEGILTAEVYSFTKQVMSTVSIAGKFLSKEDKVLIIDDFLANGQAAKGLIEIIGQAGAQVVGVGIVIEKSFQDGRRLIEDMGIEVTSLARIKNFENGNLNFLEADA.

The xanthine site is built by L20 and T27. Residue 128–132 participates in 5-phospho-alpha-D-ribose 1-diphosphate binding; it reads ANGQA. K156 contributes to the xanthine binding site.

Belongs to the purine/pyrimidine phosphoribosyltransferase family. Xpt subfamily. As to quaternary structure, homodimer.

The protein resides in the cytoplasm. It carries out the reaction XMP + diphosphate = xanthine + 5-phospho-alpha-D-ribose 1-diphosphate. The protein operates within purine metabolism; XMP biosynthesis via salvage pathway; XMP from xanthine: step 1/1. Converts the preformed base xanthine, a product of nucleic acid breakdown, to xanthosine 5'-monophosphate (XMP), so it can be reused for RNA or DNA synthesis. The polypeptide is Xanthine phosphoribosyltransferase (Streptococcus pyogenes serotype M5 (strain Manfredo)).